A 49-amino-acid polypeptide reads, in one-letter code: Single-stranded DNA-binding protein (49 aa).

In terms of assembly, homodimer in the absence of DNA, monomer when binding DNA.

Binds preferentially to single-stranded DNA and therefore, destabilizes double-stranded DNA. It is involved in DNA replication, repair and recombination. Binds ss-DNA as the replication fork advances and stimulates the replisome processivity and accuracy. The protein is Single-stranded DNA-binding protein (32) of Enterobacteria phage RB9 (Bacteriophage RB9).